The following is a 2412-amino-acid chain: Genome polyprotein 1 (2412 aa).

Residues 1–23 form a disordered region; sequence MEQTLAQAVSRRGKTNTPMAEER. In terms of domain architecture, Helicase ATP-binding spans 474 to 632; sequence AMADANNCWS…AARKYPLHVE (159 aa). 487-494 lines the ATP pocket; sequence GHTGSGKS. The Helicase C-terminal domain occupies 647–813; the sequence is GGGDLLDISK…NVPFYMNETF (167 aa). Y1234 is subject to O-(5'-phospho-RNA)-tyrosine. The region spanning 1359–1574 is the Peptidase C4 domain; the sequence is ISFGASTGIL…CGYSSHNALF (216 aa). Active-site for nuclear inclusion protein A activity residues include H1404, D1440, and C1507. Residues 1858 to 1982 enclose the RdRp catalytic domain; it reads WLHGSGDGSR…AISPQFDEEF (125 aa). The disordered stretch occupies residues 2178–2202; it reads PTEDDGKLKTPSGARIPSSAADGNW.

Belongs to the bymoviruses polyprotein 1 family. In terms of processing, VPg is uridylylated by the polymerase and is covalently attached to the 5'-end of the genomic RNA. This uridylylated form acts as a nucleotide-peptide primer for the polymerase. The viral RNA1 of bymoviruses is expressed as a single polyprotein which undergoes post-translational proteolytic processing by the main proteinase NIa-pro resulting in the production of at least eight individual proteins.

Its subcellular location is the host cytoplasmic vesicle. The protein localises to the virion. It carries out the reaction RNA(n) + a ribonucleoside 5'-triphosphate = RNA(n+1) + diphosphate. The catalysed reaction is Hydrolyzes glutaminyl bonds, and activity is further restricted by preferences for the amino acids in P6 - P1' that vary with the species of potyvirus, e.g. Glu-Xaa-Xaa-Tyr-Xaa-Gln-|-(Ser or Gly) for the enzyme from tobacco etch virus. The natural substrate is the viral polyprotein, but other proteins and oligopeptides containing the appropriate consensus sequence are also cleaved.. Functionally, indispensable for virus replication. In terms of biological role, mediates the cap-independent, EIF4E-dependent translation of viral genomic RNAs. Binds to the cap-binding site of host EIF4E and thus interferes with the host EIF4E-dependent mRNA export and translation. VPg-RNA directly binds EIF4E and is a template for transcription. Also forms trimeric complexes with EIF4E-EIF4G, which are templates for translation. Has RNA-binding and proteolytic activities. Its function is as follows. An RNA-dependent RNA polymerase that plays an essential role in the virus replication. In Hordeum vulgare (Barley), this protein is Genome polyprotein 1.